The primary structure comprises 286 residues: Protein PXR1 (286 aa).

Residues 1-20 form a disordered region; the sequence is MGLAGTKVKQRFGLDPRNTS. The 47-residue stretch at 25 to 71 folds into the G-patch domain; the sequence is KSRFGHRYLESMGWAPGKGLGLVEHATTTHVKVSVKDDTVGLGAKLA. The interval 148–255 is disordered; the sequence is EDESEVNFKS…PRKHDQISNV (108 aa). Residues 168-198 show a composition bias toward basic and acidic residues; it reads PSRDSTSHAKRMRGDESKKSTRDQSKQERKE. Over residues 199-230 the composition is skewed to basic residues; the sequence is KKIKTEKKEKKEKKEKKEKKEKKEKKEKKEKK.

It belongs to the PINX1 family.

The protein localises to the nucleus. It localises to the nucleolus. In terms of biological role, involved in rRNA-processing at A0, A1 and A2 sites and negatively regulates telomerase. This is Protein PXR1 (PXR1) from Meyerozyma guilliermondii (strain ATCC 6260 / CBS 566 / DSM 6381 / JCM 1539 / NBRC 10279 / NRRL Y-324) (Yeast).